Consider the following 139-residue polypeptide: D-ribose pyranase (139 aa).

The Proton donor role is filled by histidine 20. Substrate-binding positions include aspartate 28, histidine 106, and 128–130 (YAN).

Belongs to the RbsD / FucU family. RbsD subfamily. In terms of assembly, homodecamer.

The protein resides in the cytoplasm. The catalysed reaction is beta-D-ribopyranose = beta-D-ribofuranose. It participates in carbohydrate metabolism; D-ribose degradation; D-ribose 5-phosphate from beta-D-ribopyranose: step 1/2. In terms of biological role, catalyzes the interconversion of beta-pyran and beta-furan forms of D-ribose. In Escherichia coli (strain 55989 / EAEC), this protein is D-ribose pyranase.